The sequence spans 1141 residues: DNA-directed RNA polymerase subunit beta (1141 aa).

The protein belongs to the RNA polymerase beta chain family. In terms of assembly, the RNAP catalytic core consists of 2 alpha, 1 beta, 1 beta' and 1 omega subunit. When a sigma factor is associated with the core the holoenzyme is formed, which can initiate transcription.

The catalysed reaction is RNA(n) + a ribonucleoside 5'-triphosphate = RNA(n+1) + diphosphate. DNA-dependent RNA polymerase catalyzes the transcription of DNA into RNA using the four ribonucleoside triphosphates as substrates. In Parafrankia sp. (strain EAN1pec), this protein is DNA-directed RNA polymerase subunit beta.